A 444-amino-acid chain; its full sequence is Alanyl-tRNA editing protein Aarsd1 (444 aa).

His109 and His113 together coordinate Zn(2+). At Ser174 the chain carries Phosphoserine. Residues Cys209 and His213 each contribute to the Zn(2+) site.

This sequence belongs to the class-II aminoacyl-tRNA synthetase family. Alax-L subfamily. It depends on Zn(2+) as a cofactor.

The protein localises to the cytoplasm. Functionally, functions in trans to edit the amino acid moiety from incorrectly charged tRNA(Ala). The polypeptide is Alanyl-tRNA editing protein Aarsd1 (AARSD1) (Bos taurus (Bovine)).